The primary structure comprises 334 residues: uncharacterized protein (334 aa).

Residue Ser-126 participates in substrate binding. The active-site Proton acceptor is Tyr-151.

The protein belongs to the NAD(P)-dependent epimerase/dehydratase family. dTDP-glucose dehydratase subfamily.

This is an uncharacterized protein from Escherichia coli O111:H-.